Consider the following 156-residue polypeptide: MSRRHSAEKRQIIPDAKYGDVVLTKFMNSVMYEGKKSVAESIVYGAFDIIESRARVNPIEVFRAALDNVAPAIEVRSRRVGGATYQVPVEVRHERRQALAIRWLIQAARSRNDRTMVERLSAELLDAANNRGAAVKKREDTHRMAEANRAFSHYRW.

This sequence belongs to the universal ribosomal protein uS7 family. Part of the 30S ribosomal subunit. Contacts proteins S9 and S11.

One of the primary rRNA binding proteins, it binds directly to 16S rRNA where it nucleates assembly of the head domain of the 30S subunit. Is located at the subunit interface close to the decoding center, probably blocks exit of the E-site tRNA. The polypeptide is Small ribosomal subunit protein uS7 (Methylobacterium nodulans (strain LMG 21967 / CNCM I-2342 / ORS 2060)).